The chain runs to 63 residues: Large ribosomal subunit protein bL35 (63 aa).

The disordered stretch occupies residues 26–50; it reads GSGMRHNLEHKSARKRRALKRDDVL.

Belongs to the bacterial ribosomal protein bL35 family.

The polypeptide is Large ribosomal subunit protein bL35 (Bifidobacterium animalis subsp. lactis (strain AD011)).